We begin with the raw amino-acid sequence, 1027 residues long: Scavenger receptor cysteine-rich domain-containing protein SCART1 (1027 aa).

Positions methionine 1 to alanine 19 are cleaved as a signal peptide. At valine 20 to serine 906 the chain is on the extracellular side. In terms of domain architecture, SRCR 1 spans leucine 28–serine 128. 3 disulfide bridges follow: cysteine 53–cysteine 117, cysteine 66–cysteine 127, and cysteine 97–cysteine 107. An N-linked (GlcNAc...) asparagine glycan is attached at asparagine 94. The N-linked (GlcNAc...) asparagine glycan is linked to asparagine 129. 7 consecutive SRCR domains span residues leucine 135–serine 227, alanine 232–serine 326, phenylalanine 328–serine 428, leucine 434–serine 534, leucine 555–serine 656, leucine 661–serine 761, and leucine 786–tryptophan 886. Disulfide bonds link cysteine 160–cysteine 216, cysteine 171–cysteine 226, cysteine 196–cysteine 206, cysteine 253–cysteine 315, cysteine 266–cysteine 325, and cysteine 297–cysteine 307. The N-linked (GlcNAc...) asparagine glycan is linked to asparagine 332. Intrachain disulfides connect cysteine 353/cysteine 417, cysteine 366/cysteine 427, cysteine 397/cysteine 407, cysteine 472/cysteine 533, cysteine 503/cysteine 513, cysteine 594/cysteine 655, and cysteine 625/cysteine 635. 2 disulfides stabilise this stretch: cysteine 824/cysteine 885 and cysteine 855/cysteine 865. A helical membrane pass occupies residues valine 907–proline 927. Residues arginine 928–leucine 1027 lie on the Cytoplasmic side of the membrane.

As to expression, mainly expressed by CD4(+) and CD8(+) T lymphocytes. Also highly expressed in small intestine and colon. Expressed (at protein level) in small intestine, stomach, gall bladder, and placental villi.

It localises to the membrane. May play a role in the immune system, perhaps as a co-receptor on alphabeta and gammadelta T-cells. This is Scavenger receptor cysteine-rich domain-containing protein SCART1 from Homo sapiens (Human).